A 354-amino-acid chain; its full sequence is UDP-N-acetylglucosamine--N-acetylmuramyl-(pentapeptide) pyrophosphoryl-undecaprenol N-acetylglucosamine transferase 1 (354 aa).

UDP-N-acetyl-alpha-D-glucosamine is bound by residues 12 to 14, arginine 163, serine 193, and glutamine 287; that span reads TAG.

Belongs to the glycosyltransferase 28 family. MurG subfamily.

The protein resides in the cell membrane. It carries out the reaction di-trans,octa-cis-undecaprenyl diphospho-N-acetyl-alpha-D-muramoyl-L-alanyl-D-glutamyl-meso-2,6-diaminopimeloyl-D-alanyl-D-alanine + UDP-N-acetyl-alpha-D-glucosamine = di-trans,octa-cis-undecaprenyl diphospho-[N-acetyl-alpha-D-glucosaminyl-(1-&gt;4)]-N-acetyl-alpha-D-muramoyl-L-alanyl-D-glutamyl-meso-2,6-diaminopimeloyl-D-alanyl-D-alanine + UDP + H(+). Its pathway is cell wall biogenesis; peptidoglycan biosynthesis. Functionally, cell wall formation. Catalyzes the transfer of a GlcNAc subunit on undecaprenyl-pyrophosphoryl-MurNAc-pentapeptide (lipid intermediate I) to form undecaprenyl-pyrophosphoryl-MurNAc-(pentapeptide)GlcNAc (lipid intermediate II). The sequence is that of UDP-N-acetylglucosamine--N-acetylmuramyl-(pentapeptide) pyrophosphoryl-undecaprenol N-acetylglucosamine transferase 1 from Bacillus thuringiensis (strain Al Hakam).